Consider the following 539-residue polypeptide: GMP synthase [glutamine-hydrolyzing] (539 aa).

The region spanning lysine 4–aspartate 202 is the Glutamine amidotransferase type-1 domain. Cysteine 81 acts as the Nucleophile in catalysis. Active-site residues include histidine 176 and glutamate 178. A GMPS ATP-PPase domain is found at tryptophan 203–arginine 395. Serine 230 to serine 236 is an ATP binding site.

In terms of assembly, homodimer.

It carries out the reaction XMP + L-glutamine + ATP + H2O = GMP + L-glutamate + AMP + diphosphate + 2 H(+). The protein operates within purine metabolism; GMP biosynthesis; GMP from XMP (L-Gln route): step 1/1. Catalyzes the synthesis of GMP from XMP. In Burkholderia ambifaria (strain ATCC BAA-244 / DSM 16087 / CCUG 44356 / LMG 19182 / AMMD) (Burkholderia cepacia (strain AMMD)), this protein is GMP synthase [glutamine-hydrolyzing].